Here is a 121-residue protein sequence, read N- to C-terminus: Iron-sulfur cluster assembly protein CyaY (121 aa).

The protein belongs to the frataxin family.

In terms of biological role, involved in iron-sulfur (Fe-S) cluster assembly. May act as a regulator of Fe-S biogenesis. This is Iron-sulfur cluster assembly protein CyaY from Buchnera aphidicola subsp. Schizaphis graminum (strain Sg).